A 294-amino-acid polypeptide reads, in one-letter code: Tissue factor (294 aa).

Residues Met-1 to Gly-28 form the signal peptide. At Ala-29–Glu-251 the chain is on the extracellular side. 2 N-linked (GlcNAc...) asparagine glycosylation sites follow: Asn-37 and Asn-57. Cys-75 and Cys-83 are oxidised to a cystine. 2 N-linked (GlcNAc...) asparagine glycosylation sites follow: Asn-169 and Asn-200. Cys-218 and Cys-241 are disulfide-bonded. The WKS motif signature appears at Trp-245–Ser-247. A helical membrane pass occupies residues Thr-252–Leu-274. The S-palmitoyl cysteine moiety is linked to residue Cys-275. At Cys-275 to Ala-294 the chain is on the cytoplasmic side.

This sequence belongs to the tissue factor family. As to quaternary structure, interacts with HSPE; the interaction, inhibited by heparin, promotes the generation of activated factor X and activates coagulation in the presence of activated factor VII.

The protein localises to the membrane. Functionally, initiates blood coagulation by forming a complex with circulating factor VII or VIIa. The [TF:VIIa] complex activates factors IX or X by specific limited proteolysis. TF plays a role in normal hemostasis by initiating the cell-surface assembly and propagation of the coagulation protease cascade. The sequence is that of Tissue factor (F3) from Mus musculus (Mouse).